The chain runs to 471 residues: Dynein regulatory complex subunit 4 (471 aa).

Residues 1-24 form a disordered region; sequence MAPKKKGTKKESKKDAVATGDIEG. Coiled-coil stretches lie at residues 23–239 and 282–425; these read EGAS…YNDI and LSRA…DVAK.

It belongs to the DRC4 family. In terms of assembly, component of the nexin-dynein regulatory complex (N-DRC). Interacts with DRC1, DRC2 and DRC5.

Its subcellular location is the cytoplasm. It is found in the cytoskeleton. The protein resides in the flagellum axoneme. It localises to the flagellum basal body. Functionally, component of the nexin-dynein regulatory complex (N-DRC), a key regulator of ciliary/flagellar motility which maintains the alignment and integrity of the distal axoneme and regulates microtubule sliding in motile axonemes. Plays an important role in the assembly of the N-DRC linker. The sequence is that of Dynein regulatory complex subunit 4 from Chlamydomonas reinhardtii (Chlamydomonas smithii).